The chain runs to 379 residues: Chaperone protein DnaJ (379 aa).

One can recognise a J domain in the interval 5 to 69; that stretch reads EYYERLGVDK…QKRAAYDQYG (65 aa). A CR-type zinc finger spans residues 141–223; it reads GVEKQVKYNR…CHGSGHEKVA (83 aa). 8 residues coordinate Zn(2+): cysteine 154, cysteine 157, cysteine 171, cysteine 174, cysteine 197, cysteine 200, cysteine 211, and cysteine 214. CXXCXGXG motif repeat units lie at residues 154 to 161, 171 to 178, 197 to 204, and 211 to 218; these read CHTCGGSG, CHKCGGRG, CDVCHGTG, and CTTCHGSG.

This sequence belongs to the DnaJ family. Homodimer. Zn(2+) serves as cofactor.

It is found in the cytoplasm. Participates actively in the response to hyperosmotic and heat shock by preventing the aggregation of stress-denatured proteins and by disaggregating proteins, also in an autonomous, DnaK-independent fashion. Unfolded proteins bind initially to DnaJ; upon interaction with the DnaJ-bound protein, DnaK hydrolyzes its bound ATP, resulting in the formation of a stable complex. GrpE releases ADP from DnaK; ATP binding to DnaK triggers the release of the substrate protein, thus completing the reaction cycle. Several rounds of ATP-dependent interactions between DnaJ, DnaK and GrpE are required for fully efficient folding. Also involved, together with DnaK and GrpE, in the DNA replication of plasmids through activation of initiation proteins. This is Chaperone protein DnaJ from Lactococcus lactis subsp. cremoris (strain MG1363).